Here is a 417-residue protein sequence, read N- to C-terminus: Gamma-glutamyl phosphate reductase (417 aa).

This sequence belongs to the gamma-glutamyl phosphate reductase family.

The protein localises to the cytoplasm. It carries out the reaction L-glutamate 5-semialdehyde + phosphate + NADP(+) = L-glutamyl 5-phosphate + NADPH + H(+). The protein operates within amino-acid biosynthesis; L-proline biosynthesis; L-glutamate 5-semialdehyde from L-glutamate: step 2/2. Functionally, catalyzes the NADPH-dependent reduction of L-glutamate 5-phosphate into L-glutamate 5-semialdehyde and phosphate. The product spontaneously undergoes cyclization to form 1-pyrroline-5-carboxylate. This Enterobacter sp. (strain 638) protein is Gamma-glutamyl phosphate reductase.